The chain runs to 101 residues: Apolipoprotein C-II (101 aa).

An N-terminal signal peptide occupies residues 1–22 (MGTRYFLVGFLILLVLGFEVQG). The lipid binding stretch occupies residues 66 to 74 (AVDEKIRDI). The segment at 78–101 (STAAVTTYAGIITDQVFSVLSGKD) is lipoprotein lipase cofactor.

The protein belongs to the apolipoprotein C2 family. Post-translationally, proapolipoprotein C-II is synthesized as a sialic acid containing glycoprotein which is subsequently desialylated prior to its proteolytic processing. Proapolipoprotein C-II undergoes proteolytic cleavage of its N-terminal hexapeptide to generate apolipoprotein C-II. In bovine, proapolipoprotein C-II was found to be the minor form whereas apolipoprotein C-II was found to be the major form in plasma.

The protein localises to the secreted. Component of chylomicrons, very low-density lipoproteins (VLDL), low-density lipoproteins (LDL), and high-density lipoproteins (HDL) in plasma. Plays an important role in lipoprotein metabolism as an activator of lipoprotein lipase. Both proapolipoprotein C-II and apolipoprotein C-II can activate lipoprotein lipase. In Bos taurus (Bovine), this protein is Apolipoprotein C-II (APOC2).